The primary structure comprises 172 residues: Galectin-related protein (172 aa).

Ala-2 is subject to N-acetylalanine. Phosphoserine occurs at positions 22 and 25. The Galectin domain occupies 39-168 (PFCGHIKGGM…TIKINGDLQI (130 aa)).

Monomer.

Does not bind lactose, and may not bind carbohydrates. The polypeptide is Galectin-related protein (Lgalsl) (Mus musculus (Mouse)).